Reading from the N-terminus, the 2147-residue chain is MKIVRASRDQSAPVYGPRAGSQCMSNCFTFLHTCYLMGIDPVLDTTSLDAVLDSGARLDAIADEKVKRQALTDHPYRLGTEIPTVIETPAGITGHALSRPFNGTAETQDLGGYKCLGILDFLTYARGKPLPVYIIVTVGVHTRGVIVARGATYVFDPHTTDLSAEAAVYVCDDFTEAISALSFFGAMIGDFYYDAVLVYFTRCRTTLISPSELLVQIMDQYKDPDIDASVMSGSGGGGPSISSSAASASASVSPLPSGAASDGVTNGAGAQTSSKSGKKRRAPDVPPQQKGTAKTLRRSRRPIRLPERLSEVIVEDVQTIEHFRTATQSLPVKPPQEWTMYCGEEPFYRQYFVDVGRQLLAHAIDTYVSLDKTTDESAVQRFESLMGLSDELDAVIAAARATELSAPPLYKTYLSQRVSASAVTRTDRLLASKILALFEEGSATDFETVSSWLRELLQQLPVENTTTTEAKIAAFVAQHPIPGERAFVCLRNSQVKSLGELLSVKRETLKVKYMENDATYRKILDAISKLGLASNAAAAIQSADTSHLDSEQLASLAQAAEAYAQSAYESCQAKMTELLSTNHNRILTGSLPDSDIAAVLAAFKAVSENVRALREVELLKSQVHVQLAQLTEDLLYLQTAEVKLEVTPSAEIKKLRAEYETARKQISDEEMRIKELIENMEDMITDSSSSPPPPEMLDMLRTQIEEVESMTVDEQDARRADKVLGKLSTLDEAEAKATEFAQSLSTVNIPSLNEIKGVKMLKSVLETNADLRRAYVQAVTGMLENALKQLAEGNLPSDDMMSRITALAEQLPTGRQVRADLLDSTDIVSQMSRRLRYAANQKNSTQSLEDVLNFFSENDDMIRKLLKTSWGKPVATVYRRVQVEYDRKMEELRESEWLKRVKETDIDSPQTLERLLKTAPNETILAKHAPDMHARLKKRMQSEAEKRTADMKRLYEEMRKKVDTDLKVVSDSFSSQTPSMFSSIDLKSCGTSLVRLTKEDRKAAIATFNANLTKSLNSLLASLVTVETATIAAILKGADPEATSSTGSAGGGADRQKHTSTLENNISTLLGWQQKVLLPETERDLLTIAHLLTALTHMRKNWRNPAAAFSSTPHTAAYRNFAELANEIESRRTETLARYKSKYAELNASIHDNTKANDVTIKPEDTFTAAFRDTVKAMAAPFSTELQARLQARENELKDELSDLNVKLKTKLERYLAKRSSQDARWRDLITQHRIRLPEGLDVDTNRLRTDTVVTLNGIIRSAATTLPYITAKRGLEWTTEFILAAIEEKKDADPGMFAQLATLLDNSQAIARKIEEKIVYNTKVEAEMLETAPEHTRESLSNLQLMLGQLEAKRVVGGEARYKILSDAILTKQNKLAFAEDLEKLSARYFELARDIRSSKYGLDFDAQLLKTSLLKSEIGQHKKDPPSTGEEVGLPEESTTAAKISISSLLLGIAALEKYIVAHRTLLDNFVSSQPLISQAENIPALVGGPGEDDKPGQEPFDWTRIDLSRLSACDVSTALYRGTDVFGERRVMTARGIQLYLYATHGNFVFEAFSHVRGTKGLLSSSSGGGNGSGASSRQKDQQNATVTRRYRSVTVLASIAATLQTFWSEISRYDIRELLVESGRDPESAADQRDRRLNTVMNLKLFVYVMTVAWSEATPPVEPGSPEATHALEVSLLDFSTLMAALHPEYVYAITTQPVDATLRGLIARLDRRTVDAAMNTQENPPPYDMRELKAFCLDTKQWTQEDIRPQMWMSDLVKQICTSHPRNRDASTSTKLFLYMLATKVLPRDILRCLWVQFRPAYASSIASLEELVSALCDSFFKIYGTTSETVSARLKTGEKVERQVVLRHKPTMSLLDEFSQQEAVLDYILGSYVFAIPMTVGIHVTNIVNGRYRLIVRHLENLPSDPDFVKVVRSRDLSFDRFGWSYTVQNPVERSWFSLQEDRLRHLLTNPPQQDRTPLVVYDSNTNYAVNAMMPPLKAPPATSRVHLTVKNPFSTMRMIPHEDEGDDAATSETPFTSLPINIDFLRRDPPRLKRASGDSSSSVPAEDRDPDARPQDSVPDQSLSEPLFSQTKVSSIVPKDAVTTLSNESISQTFQIHPFRALSSAIMAAIEILQETRLQLDTFESDMCEAIRRIKILYLH.

The interval 1 to 233 (MKIVRASRDQ…PDIDASVMSG (233 aa)) is deubiquitination activity. The Peptidase C76 domain occupies 3–223 (IVRASRDQSA…LVQIMDQYKD (221 aa)). Residues Cys-23, Asp-156, and His-158 contribute to the active site. 4 disordered regions span residues 228–301 (ASVM…RSRR), 1419–1438 (EIGQ…GLPE), 1567–1589 (SSSS…QNAT), and 2034–2072 (RDPP…SLSE). Residues 240–261 (SISSSAASASASVSPLPSGAAS) show a composition bias toward low complexity. Position 292 (Thr-292) is a region of interest, interaction with inner tegument protein. The segment covering 2052 to 2061 (AEDRDPDARP) has biased composition (basic and acidic residues).

Belongs to the herpesviridae large tegument protein family. Interacts with host CUL1 and CUL4A; these interactions inhibit the E3 ligase activity of cullins. Interacts with inner tegument protein. Interacts with capsid vertex specific component CVC2. Interacts with the major capsid protein/MCP.

It localises to the virion tegument. The protein localises to the host cytoplasm. It is found in the host nucleus. The catalysed reaction is Thiol-dependent hydrolysis of ester, thioester, amide, peptide and isopeptide bonds formed by the C-terminal Gly of ubiquitin (a 76-residue protein attached to proteins as an intracellular targeting signal).. In terms of biological role, large tegument protein that plays multiple roles in the viral cycle. During viral entry, remains associated with the capsid while most of the tegument is detached and participates in the capsid transport toward the host nucleus. Plays a role in the routing of the capsid at the nuclear pore complex and subsequent uncoating. Within the host nucleus, acts as a deneddylase and promotes the degradation of nuclear CRLs (cullin-RING ubiquitin ligases) and thereby stabilizes nuclear CRL substrates, while cytoplasmic CRLs remain unaffected. These modifications prevent host cell cycle S-phase progression and create a favorable environment allowing efficient viral genome replication. Participates later in the secondary envelopment of capsids. Indeed, plays a linker role for the association of the outer viral tegument to the capsids together with the inner tegument protein. The polypeptide is Large tegument protein deneddylase (M48) (Mus musculus (Mouse)).